Here is a 142-residue protein sequence, read N- to C-terminus: Galactose-binding lectin l-1 (142 aa).

In terms of domain architecture, Galectin spans 3–134 (FVEVKNLIMK…DATVKNISVN (132 aa)). 68-74 (WQEEQRD) serves as a coordination point for a beta-D-galactoside. N-linked (GlcNAc...) asparagine glycosylation occurs at Asn130.

Homodimer. The N-terminus is blocked. Skin; highest expression in that of individuals showing resistance to infectious disease.

It localises to the secreted. Its function is as follows. Involved in host defense at the body surface. Causes agglutination of the Gram-positive bacterium S.difficile. Possesses calcium-independent hemagglutinating activity. The chain is Galactose-binding lectin l-1 from Anguilla japonica (Japanese eel).